The chain runs to 151 residues: Small ribosomal subunit protein uS15 (151 aa).

Residues 1–20 form a disordered region; the sequence is MARLHSGKRGSSGSTRPLRT.

This sequence belongs to the universal ribosomal protein uS15 family. As to quaternary structure, part of the 30S ribosomal subunit.

This chain is Small ribosomal subunit protein uS15, found in Methanococcus maripaludis (strain DSM 14266 / JCM 13030 / NBRC 101832 / S2 / LL).